A 390-amino-acid chain; its full sequence is MLPGVGVFGTSLTARVIIPLLKDEGFAVKALWGRTQEEAEELAKEMSVPFYTSRIDEVLLHQDVDLVCINLPPPLTRQIAVKTLGIGKNVICDRTATPLDAFRMMSAAHYYPKLMSIMGNVLRFLPAFVRMKQLIEEGYVGELLVCEVQVHSGSLLGKKYNWSCDDLMGGGGLHSVGTYIIDLLTFLTGQKAVKVHGLLKTFVKQTDHIKGIRQITSDDFCTFQMVLEGGVCCTVTLNFNVPGEFKQDVTVVGSAGRLLAVGTDLYGQRNSAPEQELLLQDTTSVSNSLLPEKAFSDIPSPYLRGTMKMMQAVRQAFQDQDDRRTWDGRPLTMAATFDDCLYALCVVDTIKRSSQTGEWQNIAIMTEEPELSPAYLISEAMRRSRMSLYC.

Residues 1–21 (MLPGVGVFGTSLTARVIIPLL) form the signal peptide.

This sequence belongs to the Gfo/Idh/MocA family. As to quaternary structure, homodimer. Interacts with NKIRAS2.

Its subcellular location is the secreted. Functionally, probably catalytically inactive enzyme. Does not bind NAD or NADP. The chain is Glucose-fructose oxidoreductase domain-containing protein 1 (Gfod1) from Mus musculus (Mouse).